We begin with the raw amino-acid sequence, 578 residues long: Multidrug resistance-like ATP-binding protein MdlB (578 aa).

The 284-residue stretch at 25 to 308 folds into the ABC transmembrane type-1 domain; it reads LILGFTLLLF…ITSQQSIFQQ (284 aa). Helical transmembrane passes span 26 to 46, 59 to 79, 143 to 163, 166 to 186, 196 to 216, and 260 to 280; these read ILGF…PILI, VNYS…AAIL, SLFQ…ILEW, ACIA…YQYF, VYIA…DVIQ, and LILC…FEIG. The ABC transporter domain maps to 339 to 573; it reads IKVKNLYFSY…KSYYKNMYYS (235 aa). ATP is bound at residue 373–380; the sequence is GRTGSGKS.

It belongs to the ABC transporter superfamily. Drug exporter-2 (TC 3.A.1.117) family.

It localises to the cell membrane. The catalysed reaction is ATP + H2O + xenobioticSide 1 = ADP + phosphate + xenobioticSide 2.. The sequence is that of Multidrug resistance-like ATP-binding protein MdlB (mdlB) from Buchnera aphidicola subsp. Baizongia pistaciae (strain Bp).